We begin with the raw amino-acid sequence, 397 residues long: Arginine biosynthesis bifunctional protein ArgJ (397 aa).

Substrate-binding residues include threonine 147, lysine 173, threonine 184, glutamate 270, asparagine 392, and threonine 397. Catalysis depends on threonine 184, which acts as the Nucleophile.

It belongs to the ArgJ family. As to quaternary structure, heterotetramer of two alpha and two beta chains.

The protein localises to the cytoplasm. It carries out the reaction N(2)-acetyl-L-ornithine + L-glutamate = N-acetyl-L-glutamate + L-ornithine. The catalysed reaction is L-glutamate + acetyl-CoA = N-acetyl-L-glutamate + CoA + H(+). Its pathway is amino-acid biosynthesis; L-arginine biosynthesis; L-ornithine and N-acetyl-L-glutamate from L-glutamate and N(2)-acetyl-L-ornithine (cyclic): step 1/1. It functions in the pathway amino-acid biosynthesis; L-arginine biosynthesis; N(2)-acetyl-L-ornithine from L-glutamate: step 1/4. Its function is as follows. Catalyzes two activities which are involved in the cyclic version of arginine biosynthesis: the synthesis of N-acetylglutamate from glutamate and acetyl-CoA as the acetyl donor, and of ornithine by transacetylation between N(2)-acetylornithine and glutamate. In Streptococcus thermophilus (strain CNRZ 1066), this protein is Arginine biosynthesis bifunctional protein ArgJ.